Reading from the N-terminus, the 455-residue chain is Ribulose bisphosphate carboxylase large chain (455 aa).

Lysine 5 is modified (N6,N6,N6-trimethyllysine). Residues asparagine 114 and threonine 164 each coordinate substrate. The active-site Proton acceptor is lysine 166. Lysine 168 contacts substrate. Mg(2+) contacts are provided by lysine 192, aspartate 194, and glutamate 195. Residue lysine 192 is modified to N6-carboxylysine. Histidine 285 serves as the catalytic Proton acceptor. Arginine 286, histidine 318, and serine 370 together coordinate substrate.

Belongs to the RuBisCO large chain family. Type I subfamily. As to quaternary structure, heterohexadecamer of 8 large chains and 8 small chains; disulfide-linked. The disulfide link is formed within the large subunit homodimers. It depends on Mg(2+) as a cofactor. The disulfide bond which can form in the large chain dimeric partners within the hexadecamer appears to be associated with oxidative stress and protein turnover.

It localises to the plastid. Its subcellular location is the chloroplast. The catalysed reaction is 2 (2R)-3-phosphoglycerate + 2 H(+) = D-ribulose 1,5-bisphosphate + CO2 + H2O. It catalyses the reaction D-ribulose 1,5-bisphosphate + O2 = 2-phosphoglycolate + (2R)-3-phosphoglycerate + 2 H(+). Its function is as follows. RuBisCO catalyzes two reactions: the carboxylation of D-ribulose 1,5-bisphosphate, the primary event in carbon dioxide fixation, as well as the oxidative fragmentation of the pentose substrate in the photorespiration process. Both reactions occur simultaneously and in competition at the same active site. The sequence is that of Ribulose bisphosphate carboxylase large chain from Lupinus microcarpus var. densiflorus (Whitewhorl lupine).